The primary structure comprises 701 residues: Reverse gyrase subunit A (701 aa).

A Toprim domain is found at 41-197 (MVLFIVESPN…NIYRAEFHEV (157 aa)). A Mg(2+)-binding site is contributed by Glu-47. The RG C-terminal-type zinc finger occupies 117–143 (IKKCLDCGHQFVDEDKCPRCGSENIDD). Positions 120, 123, 133, and 136 each coordinate Zn(2+). Asp-166 serves as a coordination point for Mg(2+). Residues 213 to 602 (NTNRVKAQLV…SFKKELIEIW (390 aa)) form the Topo IA-type catalytic domain. Tyr-352 functions as the O-(5'-phospho-DNA)-tyrosine intermediate in the catalytic mechanism.

It belongs to the type IA topoisomerase family. As to quaternary structure, heterodimer of an RgyA and RgyB subunit. It depends on Zn(2+) as a cofactor. Mg(2+) serves as cofactor.

It is found in the cytoplasm. Its function is as follows. Modifies the topological state of DNA by introducing positive supercoils in an ATP-dependent process. Binds to single-stranded DNA, transiently cleaves and then rejoins the end, introducing a positive supercoil in the process. The scissile phosphodiester is attacked by the catalytic tyrosine of the enzyme, resulting in the formation of a DNA-(5'-phosphotyrosyl)-enzyme intermediate. Probably involved in rewinding DNA strands in regions of the chromosome that have opened up to allow replication, transcription, DNA repair or for DNA protection. Reconstituted holoenzyme binds dsDNA a bit better than ssDNA, this subunit preferentially binds ssDNA. In isolation this subunit relaxes negatively-supercoiled DNA, and stimulates the endogenous ATPase activity of the RgyB subunit. This is Reverse gyrase subunit A from Nanoarchaeum equitans (strain Kin4-M).